Consider the following 99-residue polypeptide: Plastocyanin (99 aa).

In terms of domain architecture, Plastocyanin-like spans 1-99 (IEILLGGDDG…AGMVGKVTVN (99 aa)). Residues histidine 37, cysteine 84, histidine 87, and methionine 92 each contribute to the Cu cation site.

The protein belongs to the plastocyanin family. The cofactor is Cu(2+).

The protein localises to the plastid. It localises to the chloroplast thylakoid membrane. In terms of biological role, participates in electron transfer between P700 and the cytochrome b6-f complex in photosystem I. This is Plastocyanin (PETE) from Cucumis sativus (Cucumber).